Reading from the N-terminus, the 627-residue chain is Mitochondrial Rho GTPase 1 (627 aa).

The 169-residue stretch at 1–169 (MATVRICVCG…FFLCQKAVTH (169 aa)) folds into the Miro 1 domain. Over 1–599 (MATVRICVCG…PRSNEEGPDR (599 aa)) the chain is Cytoplasmic. Residues 10–17 (GDESTGKS), 58–62 (DTSAR), and 114–117 (NKSD) contribute to the GTP site. EF-hand domains follow at residues 185–220 (LCIN…CFDK) and 305–340 (AGYR…APGL). Positions 198, 200, 202, 204, 209, 318, 320, 322, and 329 each coordinate Ca(2+). The Miro 2 domain maps to 420–584 (RNVVLCYVLG…FVAYADAATT (165 aa)). Residues 429–436 (GASGAGKS), 465–469 (ELPGG), and 534–537 (LKAD) each bind GTP. The helical; Anchor for type IV membrane protein transmembrane segment at 600–620 (TSLYIALGATACAGVAALTIW) threads the bilayer. Topologically, residues 621-627 (RRATNAL) are mitochondrial intermembrane.

It belongs to the mitochondrial Rho GTPase family.

The protein localises to the mitochondrion outer membrane. Its function is as follows. Mitochondrial GTPase involved in mitochondrial trafficking. Probably involved in control of anterograde transport of mitochondria and their subcellular distribution. The polypeptide is Mitochondrial Rho GTPase 1 (GEM1) (Gibberella zeae (strain ATCC MYA-4620 / CBS 123657 / FGSC 9075 / NRRL 31084 / PH-1) (Wheat head blight fungus)).